Here is a 156-residue protein sequence, read N- to C-terminus: Probable succinate transporter subunit YjjB (156 aa).

4 consecutive transmembrane segments (helical) span residues 7–27 (WALL…AMVF), 54–74 (FGMD…MIGI), 86–106 (VFTV…TAMI), and 128–148 (FLKA…PGLW).

It belongs to the ThrE exporter (TC 2.A.79) family. In terms of assembly, the transporter is composed of YjjB and YjjP.

It is found in the cell inner membrane. Its function is as follows. Involved in succinate export with YjjP. Both proteins are required for export. The sequence is that of Probable succinate transporter subunit YjjB from Yersinia enterocolitica serotype O:8 / biotype 1B (strain NCTC 13174 / 8081).